A 128-amino-acid polypeptide reads, in one-letter code: Small ribosomal subunit protein uS12 (128 aa).

The tract at residues 1–29 (MPTINQLIRKGREPKERKSKSPALMGNPQ) is disordered. D89 is modified (3-methylthioaspartic acid). Residues 106-128 (GVEGRRQGRSKYGAKRPKEGGKK) form a disordered region.

The protein belongs to the universal ribosomal protein uS12 family. In terms of assembly, part of the 30S ribosomal subunit. Contacts proteins S8 and S17. May interact with IF1 in the 30S initiation complex.

Functionally, with S4 and S5 plays an important role in translational accuracy. Its function is as follows. Interacts with and stabilizes bases of the 16S rRNA that are involved in tRNA selection in the A site and with the mRNA backbone. Located at the interface of the 30S and 50S subunits, it traverses the body of the 30S subunit contacting proteins on the other side and probably holding the rRNA structure together. The combined cluster of proteins S8, S12 and S17 appears to hold together the shoulder and platform of the 30S subunit. This chain is Small ribosomal subunit protein uS12, found in Dictyoglomus turgidum (strain DSM 6724 / Z-1310).